The chain runs to 2610 residues: E3 ubiquitin-protein ligase HECTD1 (2610 aa).

Residues 246 to 269 (TVSGPSSACKPGRSTTGAPSTTAD) form a disordered region. Residues 258-269 (RSTTGAPSTTAD) are compositionally biased toward polar residues. 4 ANK repeats span residues 395–424 (VGQTLLNWASAFGTQEMVEFLCERGADVNR), 426–455 (QRSSSLHYAACFGRPQVAKTLLRHGANPDL), 459–491 (DGKTPLDKARERGHSEVVAILQSPGDWMCPVNK), and 579–612 (ITATVLDQEDDDDGHLLALQIIRDLVDKGGDIFL). Residues 489 to 513 (VNKGDDKKKKDTNKDEEECNEPKGD) form a disordered region. The span at 491–501 (KGDDKKKKDTN) shows a compositional bias: basic and acidic residues. 2 disordered regions span residues 627–657 (LAGPSSDDENEEESKPEKEDEPQEDAKELQQ) and 707–748 (SSGS…LSAP). A phosphoserine mark is found at Ser631 and Ser640. Over residues 639–657 (ESKPEKEDEPQEDAKELQQ) the composition is skewed to basic and acidic residues. A compositionally biased stretch (low complexity) spans 707–717 (SSGSPEGGSDS). The span at 718–729 (SESRSEFLEKLQ) shows a compositional bias: basic and acidic residues. The 73-residue stretch at 1266–1338 (VRSQVLKYMV…KFDLKLAPGY (73 aa)) folds into the MIB/HERC2 domain. Disordered stretches follow at residues 1343-1406 (VASP…KTER) and 1433-1483 (ENVP…SMGI). Polar residues predominate over residues 1348–1365 (PVSSTVSGTTQSWSSLVK). Composition is skewed to low complexity over residues 1373–1395 (SAAAGSSSRKGSSSSVCSVASSS) and 1441–1458 (GSSSSASTSTLTAETGSE). Position 1384 is a phosphoserine (Ser1384). The span at 1469–1479 (SVRTPGESSAI) shows a compositional bias: polar residues. Phosphoserine is present on Ser1488. Positions 1496-1515 (ELTNKEAASQRPLSSSASNR) are disordered. Ser1567 carries the phosphoserine modification. Disordered regions lie at residues 1592–1611 (GAQSFPNLTTPGTTSTVTMS) and 1674–1757 (ELDD…KGGR). Low complexity predominate over residues 1600–1611 (TTPGTTSTVTMS). Over residues 1674-1703 (ELDDDEDLPEPDEEDDENEDDNQEDQEYEE) the composition is skewed to acidic residues. Thr1760 carries the post-translational modification Phosphothreonine. Ser1772 carries the post-translational modification Phosphoserine. The tract at residues 1777–1797 (AFDPRPGRTNVQQTTDLEIPP) is disordered. The tract at residues 2029–2103 (FTFPPDEFTS…AIVWLQNRRE (75 aa)) is K-box. One can recognise an HECT domain in the interval 2151–2610 (IHADRKSVLE…ATMEKGFHLN (460 aa)). The segment at 2297–2318 (HCTESQSEASTEEGHDSLSVGS) is disordered. At Ser2318 the chain carries Phosphoserine. Cys2579 functions as the Glycyl thioester intermediate in the catalytic mechanism.

Belongs to the UPL family. K-HECT subfamily. In terms of assembly, interacts with IGSF1.

The catalysed reaction is S-ubiquitinyl-[E2 ubiquitin-conjugating enzyme]-L-cysteine + [acceptor protein]-L-lysine = [E2 ubiquitin-conjugating enzyme]-L-cysteine + N(6)-ubiquitinyl-[acceptor protein]-L-lysine.. It functions in the pathway protein modification; protein ubiquitination. Its function is as follows. E3 ubiquitin-protein ligase which accepts ubiquitin from an E2 ubiquitin-conjugating enzyme in the form of a thioester and then directly transfers the ubiquitin to targeted substrates. Mediates 'Lys-63'-linked polyubiquitination of HSP90AA1 which leads to its intracellular localization and reduced secretion. Negatively regulating HSP90AA1 secretion in cranial mesenchyme cells may impair their emigration and may be essential for the correct development of the cranial neural folds and neural tube closure. Catalyzes ubiquitination and degradation of ZNF622, an assembly factor for the ribosomal 60S subunit, in hematopoietic cells, thereby promoting hematopoietic stem cell renewal. In Homo sapiens (Human), this protein is E3 ubiquitin-protein ligase HECTD1.